We begin with the raw amino-acid sequence, 1018 residues long: MGRESRHYRKRSSSRGRSGSLSKSRSPDSKRSKKDDRTASRTHSRRERSRSRERRRSRERKRQRRSSRDRRRSRSRERRRSKSRSRGRSKEKPENGDQTADKKKIKEEKEEEKPEDQDFDQNTLEEEMRKRKERVEKWREEQRKTAMENIGEIKKELEEMKQGKKWSLEDDDEEQDKAAEAEESERMEEEEVGEEVDPLDAYMEEVKEEVKKFNMGTMKGANDKKGGMSVTKVVTVVKTKKMPHATKKKGELMENDQDAMEYSSEEEEVDLQTALTGFQTKQRKVLEPVDHQKIQYEPFRKNFYVEVPELARMSPEEVSEYRLELEGISVKGKGCPKPIKTWVQCGISMKVLNALKKHNYEKPTPIQAQAIPAIMSGRDLIGIAKTGSGKTIAFLLPMFRHILDQRPVGEAEGPLAVIMTPTRELALQITKECKKFSKSLALRVVCVYGGTGISEQIAELKRGAEIIVCTPGRMIDMLGANNGRVTNLRRVTYVVIDEADRMFDMGFEPQVMRIVDNVRPDRQTVMFSATFPRTMEALARRILSKPVEVQVGGRSVVCSDVEQHVIVIEEEKKFLKLLEILGHYQEKGSVIIFVDKQEHADGLLKDLMKASYPCMSLHGGIDQYDRDSIINDFKNGACRLLVATSVAARGLDVKQLILVVNYSCPNHYEDYVHRAGRTGRAGNKGYAYTFITEGQARYSGDILKALELSGSSVPAELEQLWTNFKEQQKAEGKIIKSSSGFSGKGFKFDETEHALANERKKLQKWALGLHDSDDEDTALDIDEQIESMFNSKKRVKDFSAPGSVSAGSAGGVSGSVSAVSGLGSLSTPSAGNIQKLEIAKKLALRIQAQKNLGAEAQDVMQQATNAILRGGTIIAPSVSAKTIAEQQAEKINAKLNYTPVEKLEEERQAAEAAETVKRYEEELEINDFPQTARWKVTSKEALQRIGEYSEAAITIRGTYFPPGKEPKEGERKIYLAIESANELAVQKAKAEITRLIKEELIRLQNSYQPTSKGRYKVL.

Residues 1–14 show a composition bias toward basic residues; sequence MGRESRHYRKRSSS. A disordered region spans residues 1 to 200; it reads MGRESRHYRK…EVGEEVDPLD (200 aa). The span at 15-24 shows a compositional bias: low complexity; the sequence is RGRSGSLSKS. Over residues 25–39 the composition is skewed to basic and acidic residues; sequence RSPDSKRSKKDDRTA. The segment covering 40 to 87 has biased composition (basic residues); that stretch reads SRTHSRRERSRSRERRRSRERKRQRRSSRDRRRSRSRERRRSKSRSRG. Residues 88 to 112 show a composition bias toward basic and acidic residues; sequence RSKEKPENGDQTADKKKIKEEKEEE. Positions 113–125 are enriched in acidic residues; the sequence is KPEDQDFDQNTLE. Residues 126 to 168 are compositionally biased toward basic and acidic residues; sequence EEMRKRKERVEKWREEQRKTAMENIGEIKKELEEMKQGKKWSL. Acidic residues predominate over residues 169–200; it reads EDDDEEQDKAAEAEESERMEEEEVGEEVDPLD. Positions 340-368 match the Q motif motif; it reads KTWVQCGISMKVLNALKKHNYEKPTPIQA. A Helicase ATP-binding domain is found at 371-549; that stretch reads IPAIMSGRDL…RRILSKPVEV (179 aa). An ATP-binding site is contributed by 384–391; it reads AKTGSGKT. The DEAD box signature appears at 497 to 500; it reads DEAD. One can recognise a Helicase C-terminal domain in the interval 560–721; the sequence is DVEQHVIVIE…SVPAELEQLW (162 aa). The stretch at 900–927 forms a coiled coil; that stretch reads VEKLEEERQAAEAAETVKRYEEELEIND.

Belongs to the DEAD box helicase family. DDX46/PRP5 subfamily. Component of the 17S U2 SnRNP complex, a ribonucleoprotein complex that contains small nuclear RNA (snRNA) U2 and a number of specific proteins.

It localises to the nucleus speckle. Its subcellular location is the nucleus. The protein resides in the cajal body. The catalysed reaction is ATP + H2O = ADP + phosphate + H(+). In terms of biological role, component of the 17S U2 SnRNP complex of the spliceosome, a large ribonucleoprotein complex that removes introns from transcribed pre-mRNAs. The 17S U2 SnRNP complex (1) directly participates in early spliceosome assembly and (2) mediates recognition of the intron branch site during pre-mRNA splicing by promoting the selection of the pre-mRNA branch-site adenosine, the nucleophile for the first step of splicing. Within the 17S U2 SnRNP complex, DDX46 plays essential roles during assembly of pre-spliceosome and proofreading of the branch site. The sequence is that of Probable ATP-dependent RNA helicase DDX46 (ddx46) from Danio rerio (Zebrafish).